A 98-amino-acid polypeptide reads, in one-letter code: UPF0251 protein Sbal_3699 (98 aa).

It belongs to the UPF0251 family.

This chain is UPF0251 protein Sbal_3699, found in Shewanella baltica (strain OS155 / ATCC BAA-1091).